The chain runs to 281 residues: 3-methyl-2-oxobutanoate hydroxymethyltransferase (281 aa).

Positions 49 and 88 each coordinate Mg(2+). Residues 49–50, Asp88, and Lys118 contribute to the 3-methyl-2-oxobutanoate site; that span reads DS. A Mg(2+)-binding site is contributed by Glu120. The Proton acceptor role is filled by Glu186.

Belongs to the PanB family. As to quaternary structure, homodecamer; pentamer of dimers. Mg(2+) is required as a cofactor.

Its subcellular location is the cytoplasm. The catalysed reaction is 3-methyl-2-oxobutanoate + (6R)-5,10-methylene-5,6,7,8-tetrahydrofolate + H2O = 2-dehydropantoate + (6S)-5,6,7,8-tetrahydrofolate. It functions in the pathway cofactor biosynthesis; (R)-pantothenate biosynthesis; (R)-pantoate from 3-methyl-2-oxobutanoate: step 1/2. In terms of biological role, catalyzes the reversible reaction in which hydroxymethyl group from 5,10-methylenetetrahydrofolate is transferred onto alpha-ketoisovalerate to form ketopantoate. The sequence is that of 3-methyl-2-oxobutanoate hydroxymethyltransferase from Chelativorans sp. (strain BNC1).